The following is a 447-amino-acid chain: RNA-binding protein 208 (447 aa).

2 RRM domains span residues 73 to 147 (RSVY…WAYA) and 158 to 236 (FHIF…WATK). The segment covering 254–269 (TNGSSSNPGMEASQDT) has biased composition (polar residues). Disordered regions lie at residues 254–279 (TNGSSSNPGMEASQDTGSKENPENNP) and 353–372 (WGNKPTPPGTSSKPLPPPLP). The 75-residue stretch at 282-356 (TTVYVGNLGH…KPIKCSWGNK (75 aa)) folds into the RRM 3 domain.

As to quaternary structure, interacts with RBP-P.

Functionally, RNA-binding protein. In Oryza sativa subsp. japonica (Rice), this protein is RNA-binding protein 208.